We begin with the raw amino-acid sequence, 409 residues long: tRNA-specific 2-thiouridylase MnmA (409 aa).

ATP contacts are provided by residues 40-47 and Leu-66; that span reads GLSGGVDS. Cys-127 serves as the catalytic Nucleophile. Cys-127 and Cys-237 are oxidised to a cystine. Gly-152 contributes to the ATP binding site. The segment at 156–179 is disordered; the sequence is RIRHREDPEPQQALPGDSSGRHQL. Residues 187–189 form an interaction with tRNA region; it reads KDQ. The active-site Cysteine persulfide intermediate is Cys-237. An interaction with tRNA region spans residues 342–343; sequence RY.

The protein belongs to the MnmA/TRMU family.

It is found in the cytoplasm. It catalyses the reaction S-sulfanyl-L-cysteinyl-[protein] + uridine(34) in tRNA + AH2 + ATP = 2-thiouridine(34) in tRNA + L-cysteinyl-[protein] + A + AMP + diphosphate + H(+). In terms of biological role, catalyzes the 2-thiolation of uridine at the wobble position (U34) of tRNA, leading to the formation of s(2)U34. This chain is tRNA-specific 2-thiouridylase MnmA, found in Prochlorococcus marinus (strain MIT 9303).